The primary structure comprises 413 residues: MKRIYLLVVGLYLLSFSRAEEGLNFPTYDGKDRVVSLSEKNLKQVLKRYDLLCLYYHEPVSSDKVAQKQFQLKEIVLELVAQVLEHKNIGFVMVDSRKEAKLAKRLGFSEEGSLYVLKGGRTIEFDGEFAADVLVEFLLDLIEDPVEIVNNKLEVQAFERIEDQIKLLGFFKNEDSEYYKAFQEAAEHFQPYIKFFATFDKGVAKKLSLKMNEVGFYEPFMDEPSVIPNKPYTEEELVEFVKEHQRPTLRPLRPEDMFETWEDDLNGIHIVAFAEKSDPDGYEFLEILKQVARDNTDNPDLSILWIDPDDFPLLVAYWEKTFKIDLFKPQIGVVNVTDADSVWMEIPDDDDLPTAEELEDWIEDVLSGKINTEDDDNEDEDDDGDNDNDDDDDDDDNSDEDNDDSDDDDDDDE.

The N-terminal stretch at 1-19 is a signal peptide; that stretch reads MKRIYLLVVGLYLLSFSRA. A Phosphotyrosine modification is found at Tyr-282. N-linked (GlcNAc...) asparagine glycosylation occurs at Asn-335. Residues 365–413 are disordered; sequence VLSGKINTEDDDNEDEDDDGDNDNDDDDDDDDNSDEDNDDSDDDDDDDE. Residues 373–413 are compositionally biased toward acidic residues; the sequence is EDDDNEDEDDDGDNDNDDDDDDDDNSDEDNDDSDDDDDDDE. Phosphoserine occurs at positions 398 and 405.

It belongs to the calsequestrin family. As to quaternary structure, monomer, homodimer and homooligomer. Mostly monomeric in the absence of calcium. Forms higher oligomers in a calcium-dependent manner. Dimers associate to form tetramers, that then form linear homomer chains. Interacts with ASPH and TRDN. Post-translationally, phosphorylation in the C-terminus, probably by CK2, moderately increases calcium buffering capacity. In terms of processing, N-glycosylated. In terms of tissue distribution, detected in stomach and vas deferens (at protein level).

The protein localises to the sarcoplasmic reticulum lumen. Its function is as follows. Calsequestrin is a high-capacity, moderate affinity, calcium-binding protein and thus acts as an internal calcium store in muscle. Calcium ions are bound by clusters of acidic residues at the protein surface, especially at the interface between subunits. Can bind around 60 Ca(2+) ions. Regulates the release of lumenal Ca(2+) via the calcium release channel RYR2; this plays an important role in triggering muscle contraction. Plays a role in excitation-contraction coupling in the heart and in regulating the rate of heart beats. The sequence is that of Calsequestrin-2 (Casq2) from Rattus norvegicus (Rat).